The chain runs to 626 residues: Chaperone protein DnaK (626 aa).

Thr197 carries the phosphothreonine; by autocatalysis modification. Positions 598 to 612 (AQGEQGQAAQPQAET) are enriched in low complexity. Residues 598–626 (AQGEQGQAAQPQAETQGDDVQDVEFEEVK) are disordered. Over residues 613–626 (QGDDVQDVEFEEVK) the composition is skewed to acidic residues.

The protein belongs to the heat shock protein 70 family.

Functionally, acts as a chaperone. The polypeptide is Chaperone protein DnaK (Flavobacterium psychrophilum (strain ATCC 49511 / DSM 21280 / CIP 103535 / JIP02/86)).